The primary structure comprises 333 residues: Syntaxin-4 (333 aa).

The Cytoplasmic portion of the chain corresponds to 1 to 312 (MGKDRLPELL…QHQKKARKKK (312 aa)). Low complexity predominate over residues 50 to 66 (YSVVSQNSHSCSNNNSS). The disordered stretch occupies residues 50 to 81 (YSVVSQNSHSCSNNNSSTEPKDRSSSKMTQYG). Positions 91 to 116 (YTEIRQQLAQIAANLETMNRMAQTVN) form a coiled coil. Residues 239 to 301 (LREMMDRFNE…DKGADELDQA (63 aa)) enclose the t-SNARE coiled-coil homology domain. A helical; Anchor for type IV membrane protein membrane pass occupies residues 313–333 (IMLIVILAAVLLVLLLVGIYL).

This sequence belongs to the syntaxin family.

Its subcellular location is the membrane. Potentially involved in docking of synaptic vesicles at presynaptic active zones. The sequence is that of Syntaxin-4 from Drosophila melanogaster (Fruit fly).